Reading from the N-terminus, the 492-residue chain is Trehalose-6-phosphate synthase (492 aa).

Position 25 (R25) interacts with D-glucose 6-phosphate. A UDP-alpha-D-glucose-binding site is contributed by 45–46; sequence GG. D-glucose 6-phosphate-binding residues include Y101 and D155. Residues R297 and K302 each contribute to the UDP-alpha-D-glucose site. Residue R335 participates in D-glucose 6-phosphate binding. 400–404 provides a ligand contact to UDP-alpha-D-glucose; the sequence is LVAKE.

It belongs to the glycosyltransferase 20 family. In terms of assembly, homotetramer.

It carries out the reaction ADP-alpha-D-glucose + D-glucose 6-phosphate = alpha,alpha-trehalose 6-phosphate + ADP + H(+). The catalysed reaction is CDP-alpha-D-glucose + D-glucose 6-phosphate = alpha,alpha-trehalose 6-phosphate + CDP + H(+). The enzyme catalyses GDP-alpha-D-glucose + D-glucose 6-phosphate = alpha,alpha-trehalose 6-phosphate + GDP + H(+). It catalyses the reaction TDP-alpha-D-glucose + D-glucose 6-phosphate = 5-methyl-UDP + alpha,alpha-trehalose 6-phosphate + H(+). It carries out the reaction D-glucose 6-phosphate + UDP-alpha-D-glucose = alpha,alpha-trehalose 6-phosphate + UDP + H(+). It participates in glycan biosynthesis; trehalose biosynthesis. Probably involved in the osmoprotection via the biosynthesis of trehalose and in the production of glycogen and alpha-glucan via the TreS-Pep2 branch involved in the biosynthesis of maltose-1-phosphate (M1P). Catalyzes the transfer of glucose from UDP-glucose (UDP-Glc) to D-glucose 6-phosphate (Glc-6-P) to form trehalose-6-phosphate. Probably also able to use ADP-Glc, CDP-Glc, GDP-Glc and TDP-Glc as glucosyl donors. The protein is Trehalose-6-phosphate synthase of Mycolicibacterium paratuberculosis (strain ATCC BAA-968 / K-10) (Mycobacterium paratuberculosis).